We begin with the raw amino-acid sequence, 62 residues long: Large ribosomal subunit protein uL30 (62 aa).

Belongs to the universal ribosomal protein uL30 family. As to quaternary structure, part of the 50S ribosomal subunit.

This Beutenbergia cavernae (strain ATCC BAA-8 / DSM 12333 / CCUG 43141 / JCM 11478 / NBRC 16432 / NCIMB 13614 / HKI 0122) protein is Large ribosomal subunit protein uL30.